We begin with the raw amino-acid sequence, 392 residues long: Succinate--CoA ligase [ADP-forming] subunit beta (392 aa).

Residues 9 to 248 form the ATP-grasp domain; that stretch reads KDILRKFGVA…TNEEDPFEVE (240 aa). ATP is bound by residues Lys50, 57–59, Glu103, Met106, and Glu111; that span reads GRG. Positions 203 and 217 each coordinate Mg(2+). Substrate is bound by residues Asn268 and 325-327; that span reads GIV.

Belongs to the succinate/malate CoA ligase beta subunit family. As to quaternary structure, heterotetramer of two alpha and two beta subunits. Mg(2+) is required as a cofactor.

It carries out the reaction succinate + ATP + CoA = succinyl-CoA + ADP + phosphate. It catalyses the reaction GTP + succinate + CoA = succinyl-CoA + GDP + phosphate. It functions in the pathway carbohydrate metabolism; tricarboxylic acid cycle; succinate from succinyl-CoA (ligase route): step 1/1. Functionally, succinyl-CoA synthetase functions in the citric acid cycle (TCA), coupling the hydrolysis of succinyl-CoA to the synthesis of either ATP or GTP and thus represents the only step of substrate-level phosphorylation in the TCA. The beta subunit provides nucleotide specificity of the enzyme and binds the substrate succinate, while the binding sites for coenzyme A and phosphate are found in the alpha subunit. This Pelodictyon phaeoclathratiforme (strain DSM 5477 / BU-1) protein is Succinate--CoA ligase [ADP-forming] subunit beta.